Consider the following 395-residue polypeptide: Elongation factor Tu (395 aa).

The 195-residue stretch at 10-204 folds into the tr-type G domain; it reads KSHVNVGTLG…AVDEYIPTPE (195 aa). Residues 19–26 are G1; that stretch reads GHVDHGKT. 19–26 provides a ligand contact to GTP; that stretch reads GHVDHGKT. A Mg(2+)-binding site is contributed by Thr26. The interval 60-64 is G2; it reads GITIS. Positions 81-84 are G3; that stretch reads DCPG. Residues 81 to 85 and 136 to 139 contribute to the GTP site; these read DCPGH and NKTD. Residues 136–139 form a G4 region; it reads NKTD. The interval 174 to 176 is G5; sequence SAL.

The protein belongs to the TRAFAC class translation factor GTPase superfamily. Classic translation factor GTPase family. EF-Tu/EF-1A subfamily. As to quaternary structure, monomer.

The protein localises to the cytoplasm. The enzyme catalyses GTP + H2O = GDP + phosphate + H(+). Its function is as follows. GTP hydrolase that promotes the GTP-dependent binding of aminoacyl-tRNA to the A-site of ribosomes during protein biosynthesis. The polypeptide is Elongation factor Tu (Oceanobacillus iheyensis (strain DSM 14371 / CIP 107618 / JCM 11309 / KCTC 3954 / HTE831)).